Reading from the N-terminus, the 40-residue chain is Toxin CSTX-17 (40 aa).

4 disulfide bridges follow: Cys2–Cys17, Cys9–Cys22, Cys16–Cys33, and Cys24–Cys31. Trp40 carries the tryptophan amide modification.

In terms of processing, contains 4 disulfide bonds. As to expression, expressed by the venom gland.

The protein localises to the secreted. The protein is Toxin CSTX-17 of Cupiennius salei (American wandering spider).